Consider the following 185-residue polypeptide: Elongation factor P (185 aa).

The protein belongs to the elongation factor P family.

The protein resides in the cytoplasm. Its pathway is protein biosynthesis; polypeptide chain elongation. Its function is as follows. Involved in peptide bond synthesis. Stimulates efficient translation and peptide-bond synthesis on native or reconstituted 70S ribosomes in vitro. Probably functions indirectly by altering the affinity of the ribosome for aminoacyl-tRNA, thus increasing their reactivity as acceptors for peptidyl transferase. This chain is Elongation factor P, found in Acetivibrio thermocellus (strain ATCC 27405 / DSM 1237 / JCM 9322 / NBRC 103400 / NCIMB 10682 / NRRL B-4536 / VPI 7372) (Clostridium thermocellum).